The sequence spans 49 residues: Small, acid-soluble spore protein O (49 aa).

Residues 23 to 49 form a disordered region; sequence AGYNEKFSNEPLTEAQRQNNKKRKKNQ.

The protein belongs to the SspO family.

The protein localises to the spore core. This Geobacillus thermodenitrificans (strain NG80-2) protein is Small, acid-soluble spore protein O.